Consider the following 221-residue polypeptide: Putative 3-methyladenine DNA glycosylase (221 aa).

Belongs to the DNA glycosylase MPG family.

The polypeptide is Putative 3-methyladenine DNA glycosylase (Herpetosiphon aurantiacus (strain ATCC 23779 / DSM 785 / 114-95)).